Reading from the N-terminus, the 337-residue chain is tRNA N6-adenosine threonylcarbamoyltransferase (337 aa).

Fe cation-binding residues include histidine 111 and histidine 115. Substrate contacts are provided by residues 134-138, aspartate 167, glycine 180, and asparagine 272; that span reads LVSGG. A Fe cation-binding site is contributed by aspartate 300.

Belongs to the KAE1 / TsaD family. Fe(2+) serves as cofactor.

The protein resides in the cytoplasm. The enzyme catalyses L-threonylcarbamoyladenylate + adenosine(37) in tRNA = N(6)-L-threonylcarbamoyladenosine(37) in tRNA + AMP + H(+). Functionally, required for the formation of a threonylcarbamoyl group on adenosine at position 37 (t(6)A37) in tRNAs that read codons beginning with adenine. Is involved in the transfer of the threonylcarbamoyl moiety of threonylcarbamoyl-AMP (TC-AMP) to the N6 group of A37, together with TsaE and TsaB. TsaD likely plays a direct catalytic role in this reaction. The protein is tRNA N6-adenosine threonylcarbamoyltransferase of Salmonella agona (strain SL483).